Here is a 474-residue protein sequence, read N- to C-terminus: 6-phospho-beta-galactosidase (474 aa).

D-galactose 6-phosphate-binding residues include Gln18, His115, Asn159, Glu160, and Asn296. Glu160 functions as the Proton donor in the catalytic mechanism. Glu374 serves as the catalytic Nucleophile. Residues Ser427, Trp428, Lys434, and Tyr436 each coordinate D-galactose 6-phosphate.

This sequence belongs to the glycosyl hydrolase 1 family.

It catalyses the reaction a 6-phospho-beta-D-galactoside + H2O = D-galactose 6-phosphate + an alcohol. Its pathway is carbohydrate metabolism; lactose degradation; D-galactose 6-phosphate and beta-D-glucose from lactose 6-phosphate: step 1/1. The protein is 6-phospho-beta-galactosidase of Clostridium acetobutylicum (strain ATCC 824 / DSM 792 / JCM 1419 / IAM 19013 / LMG 5710 / NBRC 13948 / NRRL B-527 / VKM B-1787 / 2291 / W).